A 144-amino-acid chain; its full sequence is MLVPKRVKHRREHRGRMRGAAKGGKTVAFGEYGLQALTSSWITNRQIEAARVAMTRYMKRGGKVWIKIFPHKSYTSKGVGVRMGNGKGTPEGWVAPVKREKVMFEVAGVPEEVAREALRLAAMKLPVKTKIIEREEVGGESDEG.

Belongs to the universal ribosomal protein uL16 family. Part of the 50S ribosomal subunit.

In terms of biological role, binds 23S rRNA and is also seen to make contacts with the A and possibly P site tRNAs. In Pediococcus pentosaceus (strain ATCC 25745 / CCUG 21536 / LMG 10740 / 183-1w), this protein is Large ribosomal subunit protein uL16.